Here is a 70-residue protein sequence, read N- to C-terminus: Large ribosomal subunit protein bL31 (70 aa).

Zn(2+) contacts are provided by C16, C18, C37, and C40.

The protein belongs to the bacterial ribosomal protein bL31 family. Type A subfamily. In terms of assembly, part of the 50S ribosomal subunit. Zn(2+) is required as a cofactor.

Its function is as follows. Binds the 23S rRNA. The polypeptide is Large ribosomal subunit protein bL31 (Psychromonas ingrahamii (strain DSM 17664 / CCUG 51855 / 37)).